We begin with the raw amino-acid sequence, 763 residues long: Dual specificity tyrosine-phosphorylation-regulated kinase 1A (763 aa).

Ser14 bears the Phosphoserine mark. Residues 33–56 are disordered; that stretch reads QMPHSHQYSDRRQPNISDQQVSAL. Polar residues predominate over residues 46–56; sequence PNISDQQVSAL. Tyr111 carries the post-translational modification Phosphotyrosine; by autocatalysis. The disordered stretch occupies residues 115–136; the sequence is KKRRHQQGQGDDSSHKKERKVY. Positions 117-134 match the Bipartite nuclear localization signal motif; sequence RRHQQGQGDDSSHKKERK. The residue at position 140 (Tyr140) is a Phosphotyrosine; by autocatalysis. At Tyr145 the chain carries Phosphotyrosine. A Phosphotyrosine; by autocatalysis modification is found at Tyr159. The Protein kinase domain maps to 159-479; it reads YEIDSLIGKG…PYYALQHSFF (321 aa). 165 to 173 contacts ATP; it reads IGKGSFGQV. Tyr177 bears the Phosphotyrosine; by autocatalysis mark. Lys188 lines the ATP pocket. At Tyr219 the chain carries Phosphotyrosine; by autocatalysis. 238–241 contributes to the ATP binding site; that stretch reads FEML. Asp287 acts as the Proton acceptor in catalysis. Phosphoserine; by autocatalysis is present on Ser310. Residues Tyr319 and Tyr321 each carry the phosphotyrosine; by autocatalysis modification. At Thr402 the chain carries Phosphothreonine; by autocatalysis. Positions 408–442 are disordered; that stretch reads TKDGKREYKPPGTRKLHNILGVETGGPGGRRAGES. Tyr449 carries the post-translational modification Phosphotyrosine; by autocatalysis. The span at 485–501 shows a compositional bias: polar residues; sequence EGTNTSNSVSTSPAMEQ. 3 disordered regions span residues 485–540, 596–679, and 744–763; these read EGTN…HSGG, NALH…GNQA, and DREESPMTGVCVQQSPVASS. Over residues 502 to 525 the composition is skewed to low complexity; sequence SQSSGTTSSTSSSSGGSSGTSNSG. Phosphoserine occurs at positions 529 and 538. Positions 595-625 are histidine-rich domain (HRD); that stretch reads QNALHHHHGNSSHHHHHHHHHHHHHGQQALG. Positions 598–620 are enriched in basic residues; sequence LHHHHGNSSHHHHHHHHHHHHHG. Residues 634-645 are compositionally biased toward polar residues; the sequence is NSPTNSSSTQDS. Residues 654-672 show a composition bias toward low complexity; the sequence is SMTSLSSSTTSSSTSSSST. Phosphoserine occurs at positions 748 and 758. Over residues 754–763 the composition is skewed to polar residues; the sequence is CVQQSPVASS.

It belongs to the protein kinase superfamily. CMGC Ser/Thr protein kinase family. MNB/DYRK subfamily. As to quaternary structure, interacts with RAD54L2/ARIP4. Interacts with CRY2. Interacts with RANBP9. Interacts with WDR68. Interacts with SIRT1. Can also autophosphorylate on serine and threonine residues (in vitro). Autophosphorylated on numerous tyrosine residues. In terms of tissue distribution, detected in brain (at protein level). Ubiquitous.

The protein resides in the nucleus speckle. It catalyses the reaction L-seryl-[protein] + ATP = O-phospho-L-seryl-[protein] + ADP + H(+). It carries out the reaction L-threonyl-[protein] + ATP = O-phospho-L-threonyl-[protein] + ADP + H(+). The enzyme catalyses L-tyrosyl-[protein] + ATP = O-phospho-L-tyrosyl-[protein] + ADP + H(+). The catalysed reaction is [DNA-directed RNA polymerase] + ATP = phospho-[DNA-directed RNA polymerase] + ADP + H(+). Its activity is regulated as follows. Inhibited by RANBP9. Inhibited by harmine, leucettamine B and leucettine L41. Functionally, dual-specificity kinase which possesses both serine/threonine and tyrosine kinase activities. Exhibits a substrate preference for proline at position P+1 and arginine at position P-3. Plays an important role in double-strand breaks (DSBs) repair following DNA damage. Mechanistically, phosphorylates RNF169 and increases its ability to block accumulation of TP53BP1 at the DSB sites thereby promoting homologous recombination repair (HRR). Also acts as a positive regulator of transcription by acting as a CTD kinase that mediates phosphorylation of the CTD (C-terminal domain) of the large subunit of RNA polymerase II (RNAP II) POLR2A. May play a role in a signaling pathway regulating nuclear functions of cell proliferation. Modulates alternative splicing by phosphorylating the splice factor SRSF6. Has pro-survival function and negatively regulates the apoptotic process. Promotes cell survival upon genotoxic stress through phosphorylation of SIRT1. This in turn inhibits p53/TP53 activity and apoptosis. Phosphorylates SEPTIN4, SEPTIN5 and SF3B1 at 'Thr-434'. In Rattus norvegicus (Rat), this protein is Dual specificity tyrosine-phosphorylation-regulated kinase 1A (Dyrk1a).